Here is a 1197-residue protein sequence, read N- to C-terminus: uncharacterized protein (1197 aa).

This is an uncharacterized protein from Sinorhizobium fredii (strain NBRC 101917 / NGR234).